The chain runs to 963 residues: Kinesin-1 heavy chain (963 aa).

N-acetylalanine is present on Ala-2. The Kinesin motor domain maps to 8–325; sequence NIKVMCRFRP…LLFGQRAKTI (318 aa). An ATP-binding site is contributed by 85–92; the sequence is GQTSSGKT. Residue Lys-213 forms a Glycyl lysine isopeptide (Lys-Gly) (interchain with G-Cter in SUMO2) linkage. Residues 329 to 914 adopt a coiled-coil conformation; the sequence is VCVNVELTAE…AVRSKNMARR (586 aa). A disordered region spans residues 908–963; that stretch reads SKNMARRGHSAQIAKPIRPGQHPAASPTHPGTVRGGGSFVQNNQPVGLRGGGGKQS. The globular stretch occupies residues 915–963; it reads GHSAQIAKPIRPGQHPAASPTHPGTVRGGGSFVQNNQPVGLRGGGGKQS. A phosphoserine mark is found at Ser-933 and Ser-945. Omega-N-methylarginine is present on Arg-956.

It belongs to the TRAFAC class myosin-kinesin ATPase superfamily. Kinesin family. Kinesin subfamily. As to quaternary structure, oligomer composed of two heavy chains and two light chains. Interacts with GRIP1 and PPP1R42. Interacts with SYBU. Interacts with JAKMIP1. Interacts with PLEKHM2. Interacts with ECPAS. Interacts with ZFYVE27. Found in a complex with OGT, RHOT1, RHOT2 and TRAK1. Interacts with APP (via cytoplasmic domain).

Its subcellular location is the cytoplasm. It is found in the cytoskeleton. The protein localises to the cytolytic granule membrane. The protein resides in the lysosome membrane. In terms of biological role, microtubule-dependent motor required for normal distribution of mitochondria and lysosomes. May be involved in the mechanisms of growth arrest induced by exposure to DNA-damaging drugs or by cellular senescence. Can induce formation of neurite-like membrane protrusions in non-neuronal cells in a ZFYVE27-dependent manner. Regulates centrosome and nuclear positioning during mitotic entry. During the G2 phase of the cell cycle in a BICD2-dependent manner, antagonizes dynein function and drives the separation of nuclei and centrosomes. Required for anterograde axonal transportation of MAPK8IP3/JIP3 which is essential for MAPK8IP3/JIP3 function in axon elongation. Through binding with PLEKHM2 and ARL8B, directs lysosome movement toward microtubule plus ends. Involved in NK cell-mediated cytotoxicity. Drives the polarization of cytolytic granules and microtubule-organizing centers (MTOCs) toward the immune synapse between effector NK lymphocytes and target cells. This chain is Kinesin-1 heavy chain (Kif5b), found in Mus musculus (Mouse).